The primary structure comprises 296 residues: N-acetylmuramic acid 6-phosphate etherase (296 aa).

The region spanning 54–217 is the SIS domain; it reads VIASFQQGGR…STTAMVGIGK (164 aa). Glutamate 82 serves as the catalytic Proton donor. Glutamate 113 is an active-site residue.

The protein belongs to the GCKR-like family. MurNAc-6-P etherase subfamily. Homodimer.

It catalyses the reaction N-acetyl-D-muramate 6-phosphate + H2O = N-acetyl-D-glucosamine 6-phosphate + (R)-lactate. It functions in the pathway amino-sugar metabolism; N-acetylmuramate degradation. In terms of biological role, specifically catalyzes the cleavage of the D-lactyl ether substituent of MurNAc 6-phosphate, producing GlcNAc 6-phosphate and D-lactate. The polypeptide is N-acetylmuramic acid 6-phosphate etherase (Shouchella clausii (strain KSM-K16) (Alkalihalobacillus clausii)).